Consider the following 337-residue polypeptide: Monoacylglycerol lipase abhd6-A (337 aa).

The Extracellular segment spans residues 1–19; the sequence is MDLDVLNMFLVAGGTLLVP. A helical; Signal-anchor for type II membrane protein transmembrane segment spans residues 20-42; that stretch reads ILAFVTSFLLWPAALIKIYYWYW. Residues 43-337 are Cytoplasmic-facing; the sequence is RRALGMQVKF…QSTENNKKHE (295 aa). The AB hydrolase-1 domain occupies 73–313; the sequence is SVLMLHGFSA…CGHSVVMERP (241 aa). Ser148 (nucleophile) is an active-site residue. Residues Asp278 and His306 each act as charge relay system in the active site.

This sequence belongs to the AB hydrolase superfamily.

Its subcellular location is the late endosome membrane. It is found in the lysosome membrane. It localises to the mitochondrion membrane. The enzyme catalyses Hydrolyzes glycerol monoesters of long-chain fatty acids.. It carries out the reaction 1-octanoylglycerol + H2O = octanoate + glycerol + H(+). The catalysed reaction is 1-decanoylglycerol + H2O = decanoate + glycerol + H(+). It catalyses the reaction 1-dodecanoylglycerol + H2O = dodecanoate + glycerol + H(+). The enzyme catalyses 1-tetradecanoylglycerol + H2O = tetradecanoate + glycerol + H(+). It carries out the reaction 2-hexadecanoylglycerol + H2O = glycerol + hexadecanoate + H(+). The catalysed reaction is 2-(9Z-octadecenoyl)-glycerol + H2O = glycerol + (9Z)-octadecenoate + H(+). It catalyses the reaction 1-(9Z-octadecenoyl)-glycerol + H2O = glycerol + (9Z)-octadecenoate + H(+). The enzyme catalyses 2-(9Z,12Z-octadecadienoyl)-glycerol + H2O = (9Z,12Z)-octadecadienoate + glycerol + H(+). It carries out the reaction 2-(5Z,8Z,11Z,14Z-eicosatetraenoyl)-glycerol + H2O = glycerol + (5Z,8Z,11Z,14Z)-eicosatetraenoate + H(+). The catalysed reaction is 1-(5Z,8Z,11Z,14Z-eicosatetraenoyl)-glycerol + H2O = glycerol + (5Z,8Z,11Z,14Z)-eicosatetraenoate + H(+). It catalyses the reaction 1-(9Z,12Z-octadecadienoyl)-glycerol + H2O = (9Z,12Z)-octadecadienoate + glycerol + H(+). The enzyme catalyses 3-(9Z-octadecenoyl)-sn-glycero-1-phospho-(3'-(9Z-octadecenoyl)-1'-sn-glycerol) + H2O = 3-(9Z-octadecenoyl)-sn-glycero-1-phospho-(1'-sn-glycerol) + (9Z)-octadecenoate + H(+). It carries out the reaction (S,S)-2-(9Z-octadecenoyl)-sn-glycero-1-phospho-(2'-(9Z-octadecenoyl)-1'-sn-glycerol) + H2O = (S,S)-2-(9Z-octadecenoyl)-sn-glycero-1-phospho-(1'-sn-glycerol) + (9Z)-octadecenoate + H(+). The catalysed reaction is (R,R)-2-(9Z-octadecenoyl)-sn-glycero-3-phospho-(2'-(9Z-octadecenoyl)-3'-sn-glycerol) + H2O = (R,R)-2-(9Z-octadecenoyl)-sn-glycero-3-phospho-(3'-sn-glycerol) + (9Z)-octadecenoate + H(+). In terms of biological role, lipase that preferentially hydrolysis medium-chain saturated monoacylglycerols including 2-arachidonoylglycerol. Through 2-arachidonoylglycerol degradation may regulate endocannabinoid signaling pathways. Also has a lysophosphatidyl lipase activity with a preference for lysophosphatidylglycerol among other lysophospholipids. Also able to degrade bis(monoacylglycero)phosphate (BMP) and constitutes the major enzyme for BMP catabolism. BMP, also known as lysobisphosphatidic acid, is enriched in late endosomes and lysosomes and plays a key role in the formation of intraluminal vesicles and in lipid sorting. This Xenopus laevis (African clawed frog) protein is Monoacylglycerol lipase abhd6-A (abhd6-a).